Here is a 515-residue protein sequence, read N- to C-terminus: Cytidine and dCMP deaminase domain-containing protein 1 (515 aa).

Polar residues-rich tracts occupy residues 1–11 (MKEAGQMQNLE) and 18–27 (SVSTQTGSMT). Disordered stretches follow at residues 1 to 27 (MKEA…GSMT) and 56 to 83 (RQKS…STDK). A compositionally biased stretch (basic and acidic residues) spans 60-83 (QKNEEGKHGPLGDNEEMTRVSTDK). Residues 71 to 169 (GDNEEMTRVS…SLLTEASSSE (99 aa)) enclose the CMP/dCMP-type deaminase 1 domain. His-110, Cys-135, and Cys-138 together coordinate Zn(2+). Residues 272-284 (NLRQNMKDLILLL) carry the Nuclear export signal motif. The 166-residue stretch at 318-483 (EIARHCMVQA…LNPSEAYGLE (166 aa)) folds into the CMP/dCMP-type deaminase 2 domain. His-399 is a binding site for Zn(2+). The active-site Proton donor is the Glu-401. Zn(2+) is bound by residues Cys-427 and Cys-430. The tract at residues 481–515 (GLEQNEPERRENGVLRPVPQKEEQHQDKKLRLGIH) is disordered. A compositionally biased stretch (basic and acidic residues) spans 486–515 (EPERRENGVLRPVPQKEEQHQDKKLRLGIH). A Bipartite nuclear localization signal motif is present at residues 489 to 511 (RRENGVLRPVPQKEEQHQDKKLR).

The protein belongs to the cytidine and deoxycytidylate deaminase family. It depends on Zn(2+) as a cofactor.

Its subcellular location is the cytoplasm. It is found in the nucleus. The enzyme catalyses 2'-deoxycytidine + H2O + H(+) = 2'-deoxyuridine + NH4(+). The catalysed reaction is cytidine + H2O + H(+) = uridine + NH4(+). In terms of biological role, catalyzes the deamination of cytidine and deoxycytidine into uridine and deoxyuridine, respectively. May play an important role in testicular development and spermatogenesis. This is Cytidine and dCMP deaminase domain-containing protein 1 (CDADC1) from Macaca fascicularis (Crab-eating macaque).